A 212-amino-acid polypeptide reads, in one-letter code: Protein irg-1 (212 aa).

In terms of tissue distribution, expressed in the intestine.

Functionally, plays a role in innate immunity by conferring resistance to virulent strains of the Gram-negative bacterium P.aeruginosa via the zip-2 pathway. Can act independently of several immunity-related pathways including pmk-1 p38MAPK, dbl-1 TGF-beta, kgb-1 JNK and bar-1/beta-catenin pathways. In Caenorhabditis elegans, this protein is Protein irg-1.